Here is a 330-residue protein sequence, read N- to C-terminus: Lysophospholipase D GDPD3 (330 aa).

Position 1 (Met1) is a topological domain, cytoplasmic. Residues Ile2–Phe22 form a helical membrane-spanning segment. The Extracellular portion of the chain corresponds to Leu23–Thr200. The GP-PDE domain maps to Ile39–Leu308. Positions 71, 73, and 86 each coordinate a divalent metal cation. The helical transmembrane segment at Ile201–Ile221 threads the bilayer. Residues Pro222 to Lys330 lie on the Cytoplasmic side of the membrane. The segment at Gln311–Lys330 is disordered.

Belongs to the glycerophosphoryl diester phosphodiesterase family. As to expression, highly expressed in stomach and kidney. In stomach detected in the glandular epithelium. Predominantly expressed in the stomach (at protein level).

Its subcellular location is the membrane. The protein localises to the cytoplasm. The protein resides in the perinuclear region. It localises to the endoplasmic reticulum membrane. It catalyses the reaction 1-hexadecanoyl-sn-glycero-3-phosphocholine + H2O = 1-hexadecanoyl-sn-glycero-3-phosphate + choline + H(+). The enzyme catalyses 1-O-hexadecyl-sn-glycero-3-phosphocholine + H2O = 1-O-hexadecyl-sn-glycero-3-phosphate + choline + H(+). It carries out the reaction 1-O-(1Z-octadecenyl)-sn-glycero-3-phospho-N-hexadecanoyl-ethanolamine + H2O = 1-O-(1Z-octadecenyl)-sn-glycero-3-phosphate + N-hexadecanoylethanolamine + H(+). The catalysed reaction is N-(5Z,8Z,11Z,14Z-eicosatetraenoyl)-1-(9Z-octadecenoyl)-sn-glycero-3-phosphoethanolamine + H2O = N-(5Z,8Z,11Z,14Z-eicosatetraenoyl)-ethanolamine + 1-(9Z-octadecenoyl)-sn-glycero-3-phosphate + H(+). It catalyses the reaction N,1-di-(9Z-octadecenoyl)-sn-glycero-3-phosphoethanolamine + H2O = N-(9Z-octadecenoyl) ethanolamine + 1-(9Z-octadecenoyl)-sn-glycero-3-phosphate + H(+). The enzyme catalyses N-hexadecanoyl-1-(9Z-octadecenoyl)-sn-glycero-3-phosphoethanolamine + H2O = N-hexadecanoylethanolamine + 1-(9Z-octadecenoyl)-sn-glycero-3-phosphate + H(+). It carries out the reaction 1-hexadecanoyl-sn-glycero-3-phosphocholine + H2O = sn-glycerol 3-phosphocholine + hexadecanoate + H(+). Its activity is regulated as follows. Lysophospholipase D activity is stimulated by calcium. Loss of lysophospholipase D activity in presence of EDTA. In terms of biological role, hydrolyzes lysoglycerophospholipids to produce lysophosphatidic acid (LPA) and the corresponding amines. Shows a preference for 1-O-alkyl-sn-glycero-3-phosphocholine (lyso-PAF), lysophosphatidylcholine (lyso-PC) and N-acylethanolamine lysophospholipids. Does not display glycerophosphodiester phosphodiesterase activity, since it cannot hydrolyze either glycerophosphoinositol or glycerophosphocholine. This chain is Lysophospholipase D GDPD3, found in Mus musculus (Mouse).